A 561-amino-acid chain; its full sequence is Dihydroxy-acid dehydratase (561 aa).

[2Fe-2S] cluster is bound at residue cysteine 50. A Mg(2+)-binding site is contributed by aspartate 82. Cysteine 123 provides a ligand contact to [2Fe-2S] cluster. Residues aspartate 124 and lysine 125 each contribute to the Mg(2+) site. At lysine 125 the chain carries N6-carboxylysine. Cysteine 195 is a binding site for [2Fe-2S] cluster. Glutamate 447 lines the Mg(2+) pocket. Serine 473 acts as the Proton acceptor in catalysis.

Belongs to the IlvD/Edd family. In terms of assembly, homodimer. [2Fe-2S] cluster is required as a cofactor. Requires Mg(2+) as cofactor.

The enzyme catalyses (2R)-2,3-dihydroxy-3-methylbutanoate = 3-methyl-2-oxobutanoate + H2O. It carries out the reaction (2R,3R)-2,3-dihydroxy-3-methylpentanoate = (S)-3-methyl-2-oxopentanoate + H2O. It participates in amino-acid biosynthesis; L-isoleucine biosynthesis; L-isoleucine from 2-oxobutanoate: step 3/4. It functions in the pathway amino-acid biosynthesis; L-valine biosynthesis; L-valine from pyruvate: step 3/4. In terms of biological role, functions in the biosynthesis of branched-chain amino acids. Catalyzes the dehydration of (2R,3R)-2,3-dihydroxy-3-methylpentanoate (2,3-dihydroxy-3-methylvalerate) into 2-oxo-3-methylpentanoate (2-oxo-3-methylvalerate) and of (2R)-2,3-dihydroxy-3-methylbutanoate (2,3-dihydroxyisovalerate) into 2-oxo-3-methylbutanoate (2-oxoisovalerate), the penultimate precursor to L-isoleucine and L-valine, respectively. The sequence is that of Dihydroxy-acid dehydratase from Chloroflexus aurantiacus (strain ATCC 29366 / DSM 635 / J-10-fl).